Here is a 401-residue protein sequence, read N- to C-terminus: Bifunctional enzyme IspD/IspF (401 aa).

The tract at residues 1–234 (MQKPPRTAAI…SRLTAALGDI (234 aa)) is 2-C-methyl-D-erythritol 4-phosphate cytidylyltransferase. The 2-C-methyl-D-erythritol 2,4-cyclodiphosphate synthase stretch occupies residues 235–401 (RTGTGYDVHA…SPWGAEGQAS (167 aa)). A divalent metal cation is bound by residues aspartate 241 and histidine 243. Residues 241-243 (DVH) and 267-268 (HS) each bind 4-CDP-2-C-methyl-D-erythritol 2-phosphate. Position 275 (histidine 275) interacts with a divalent metal cation. 4-CDP-2-C-methyl-D-erythritol 2-phosphate contacts are provided by residues 289–291 (DIG), 365–368 (TTSE), phenylalanine 372, and arginine 375.

In the N-terminal section; belongs to the IspD/TarI cytidylyltransferase family. IspD subfamily. This sequence in the C-terminal section; belongs to the IspF family. It depends on a divalent metal cation as a cofactor.

The catalysed reaction is 2-C-methyl-D-erythritol 4-phosphate + CTP + H(+) = 4-CDP-2-C-methyl-D-erythritol + diphosphate. It carries out the reaction 4-CDP-2-C-methyl-D-erythritol 2-phosphate = 2-C-methyl-D-erythritol 2,4-cyclic diphosphate + CMP. Its pathway is isoprenoid biosynthesis; isopentenyl diphosphate biosynthesis via DXP pathway; isopentenyl diphosphate from 1-deoxy-D-xylulose 5-phosphate: step 2/6. The protein operates within isoprenoid biosynthesis; isopentenyl diphosphate biosynthesis via DXP pathway; isopentenyl diphosphate from 1-deoxy-D-xylulose 5-phosphate: step 4/6. In terms of biological role, bifunctional enzyme that catalyzes the formation of 4-diphosphocytidyl-2-C-methyl-D-erythritol from CTP and 2-C-methyl-D-erythritol 4-phosphate (MEP) (IspD), and catalyzes the conversion of 4-diphosphocytidyl-2-C-methyl-D-erythritol 2-phosphate (CDP-ME2P) to 2-C-methyl-D-erythritol 2,4-cyclodiphosphate (ME-CPP) with a corresponding release of cytidine 5-monophosphate (CMP) (IspF). This chain is Bifunctional enzyme IspD/IspF, found in Rhodopseudomonas palustris (strain HaA2).